Consider the following 272-residue polypeptide: Phosphate import ATP-binding protein PstB (272 aa).

The ABC transporter domain occupies 18-257 (VSMQNVTISY…FNDTQSIFNS (240 aa)). 50–57 (GPSGCGKS) contacts ATP.

This sequence belongs to the ABC transporter superfamily. Phosphate importer (TC 3.A.1.7) family. As to quaternary structure, the complex is composed of two ATP-binding proteins (PstB), two transmembrane proteins (PstC and PstA) and a solute-binding protein (PstS).

It localises to the cell inner membrane. The catalysed reaction is phosphate(out) + ATP + H2O = ADP + 2 phosphate(in) + H(+). Part of the ABC transporter complex PstSACB involved in phosphate import. Responsible for energy coupling to the transport system. The sequence is that of Phosphate import ATP-binding protein PstB from Synechococcus sp. (strain CC9902).